The chain runs to 393 residues: Ig heavy chain C region (393 aa).

Ig-like domains follow at residues 63–157, 168–260, and 270–370; these read PTVI…RNIT, PVIK…ASIH, and PSVS…RTVN. Residues N119, N155, N200, N230, N329, N366, N370, and N380 are each glycosylated (N-linked (GlcNAc...) asparagine).

The chain is Ig heavy chain C region from Heterodontus francisci (Horn shark).